Consider the following 503-residue polypeptide: Cardiolipin synthase (503 aa).

The next 3 membrane-spanning stretches (helical) occupy residues 5 to 25 (LNVL…RGFL), 30 to 50 (VGTL…IIFF), and 59 to 79 (LTWL…YLMF). 2 consecutive PLD phosphodiesterase domains span residues 238–265 (INYR…GDEY) and 416–443 (NRGF…DMRS). Catalysis depends on residues histidine 243, lysine 245, aspartate 250, histidine 421, lysine 423, and aspartate 428.

This sequence belongs to the phospholipase D family. Cardiolipin synthase subfamily.

The protein localises to the cell membrane. It carries out the reaction 2 a 1,2-diacyl-sn-glycero-3-phospho-(1'-sn-glycerol) = a cardiolipin + glycerol. In terms of biological role, catalyzes the reversible phosphatidyl group transfer from one phosphatidylglycerol molecule to another to form cardiolipin (CL) (diphosphatidylglycerol) and glycerol. The chain is Cardiolipin synthase (cls) from Alkalihalophilus pseudofirmus (strain ATCC BAA-2126 / JCM 17055 / OF4) (Bacillus pseudofirmus).